Here is a 437-residue protein sequence, read N- to C-terminus: Adenylosuccinate lyase (437 aa).

N(6)-(1,2-dicarboxyethyl)-AMP is bound by residues 4–5, 70–72, and 96–97; these read RY, KHD, and TS. The active-site Proton donor/acceptor is His-144. Gln-215 contacts N(6)-(1,2-dicarboxyethyl)-AMP. Catalysis depends on Ser-265, which acts as the Proton donor/acceptor. Residues Ser-266, 271-273, and 310-314 contribute to the N(6)-(1,2-dicarboxyethyl)-AMP site; these read KKN and SVERV.

It belongs to the lyase 1 family. Adenylosuccinate lyase subfamily. As to quaternary structure, homooligomer. Residues from neighboring subunits contribute catalytic and substrate-binding residues to each active site.

The enzyme catalyses N(6)-(1,2-dicarboxyethyl)-AMP = fumarate + AMP. It catalyses the reaction (2S)-2-[5-amino-1-(5-phospho-beta-D-ribosyl)imidazole-4-carboxamido]succinate = 5-amino-1-(5-phospho-beta-D-ribosyl)imidazole-4-carboxamide + fumarate. It participates in purine metabolism; AMP biosynthesis via de novo pathway; AMP from IMP: step 2/2. It functions in the pathway purine metabolism; IMP biosynthesis via de novo pathway; 5-amino-1-(5-phospho-D-ribosyl)imidazole-4-carboxamide from 5-amino-1-(5-phospho-D-ribosyl)imidazole-4-carboxylate: step 2/2. Catalyzes two reactions in de novo purine nucleotide biosynthesis. Catalyzes the breakdown of 5-aminoimidazole- (N-succinylocarboxamide) ribotide (SAICAR or 2-[5-amino-1-(5-phospho-beta-D-ribosyl)imidazole-4-carboxamido]succinate) to 5-aminoimidazole-4-carboxamide ribotide (AICAR or 5-amino-1-(5-phospho-beta-D-ribosyl)imidazole-4-carboxamide) and fumarate, and of adenylosuccinate (ADS or N(6)-(1,2-dicarboxyethyl)-AMP) to adenosine monophosphate (AMP) and fumarate. This is Adenylosuccinate lyase (purB) from Aquifex aeolicus (strain VF5).